Consider the following 156-residue polypeptide: Small ribosomal subunit protein uS7 (156 aa).

It belongs to the universal ribosomal protein uS7 family. As to quaternary structure, part of the 30S ribosomal subunit. Contacts proteins S9 and S11.

One of the primary rRNA binding proteins, it binds directly to 16S rRNA where it nucleates assembly of the head domain of the 30S subunit. Is located at the subunit interface close to the decoding center, probably blocks exit of the E-site tRNA. In Vibrio parahaemolyticus serotype O3:K6 (strain RIMD 2210633), this protein is Small ribosomal subunit protein uS7.